Consider the following 313-residue polypeptide: Ribosomal RNA small subunit methyltransferase H (313 aa).

S-adenosyl-L-methionine contacts are provided by residues 35–37 (GGH), aspartate 55, phenylalanine 79, aspartate 101, and glutamine 108.

The protein belongs to the methyltransferase superfamily. RsmH family.

The protein resides in the cytoplasm. The enzyme catalyses cytidine(1402) in 16S rRNA + S-adenosyl-L-methionine = N(4)-methylcytidine(1402) in 16S rRNA + S-adenosyl-L-homocysteine + H(+). Functionally, specifically methylates the N4 position of cytidine in position 1402 (C1402) of 16S rRNA. The protein is Ribosomal RNA small subunit methyltransferase H of Klebsiella pneumoniae subsp. pneumoniae (strain ATCC 700721 / MGH 78578).